The sequence spans 208 residues: Large ribosomal subunit protein uL4 (208 aa).

The tract at residues 44 to 85 (RQGTKKTKTRAEVRGGGKKPWRQKGTGRARQGSIRAPHWRGG) is disordered. Residues 59–70 (GGKKPWRQKGTG) show a composition bias toward basic residues.

Belongs to the universal ribosomal protein uL4 family. Part of the 50S ribosomal subunit.

In terms of biological role, one of the primary rRNA binding proteins, this protein initially binds near the 5'-end of the 23S rRNA. It is important during the early stages of 50S assembly. It makes multiple contacts with different domains of the 23S rRNA in the assembled 50S subunit and ribosome. Functionally, forms part of the polypeptide exit tunnel. The polypeptide is Large ribosomal subunit protein uL4 (Mesoplasma florum (strain ATCC 33453 / NBRC 100688 / NCTC 11704 / L1) (Acholeplasma florum)).